We begin with the raw amino-acid sequence, 364 residues long: 2-oxoadipate dioxygenase/decarboxylase, chloroplastic/amyloplastic (364 aa).

The transit peptide at 1-49 (MAVALAGARSPGAGAILSLRRLAPAAAAPVRLGGSGTPGTRRRRGIAMA) directs the protein to the chloroplast. Histidine 107 and arginine 111 together coordinate 2-oxoadipate. Histidine 107 is a Fe(2+) binding site. Fe(2+) is bound at residue histidine 243. Positions 289 and 313 each coordinate 2-oxoadipate. A Fe(2+)-binding site is contributed by glutamate 315.

This sequence belongs to the 2-oxoadipate dioxygenase/decarboxylase family. Requires Fe(2+) as cofactor. In terms of tissue distribution, expressed in roots, stems, leaf sheaths, leaf blades, panicles, and endosperm.

Its subcellular location is the plastid. It is found in the chloroplast. It localises to the amyloplast. It carries out the reaction 2-oxoadipate + O2 = (R)-2-hydroxyglutarate + CO2. Its pathway is amino-acid degradation. Its function is as follows. Catalyzes the decarboxylation and hydroxylation of 2-oxoadipate (2OA) to form D-2-hydroxyglutarate (D-2-HGA). Is involved in a D-lysine catabolic pathway. Involved in the regulation of starch synthesis and amyloplast development within the peripheral endosperm during the grain-filling stage. The polypeptide is 2-oxoadipate dioxygenase/decarboxylase, chloroplastic/amyloplastic (Oryza sativa subsp. japonica (Rice)).